The following is a 314-amino-acid chain: uncharacterized protein (314 aa).

The segment at 1–70 is disordered; the sequence is MAGNSQRRGA…QGRHKKTDDT (70 aa). The segment covering 44–65 has biased composition (basic residues); that stretch reads RPHHPAGKRAAKAARQAQGRHK. Residues G265, I285, and L294 each coordinate S-adenosyl-L-methionine.

This sequence belongs to the class IV-like SAM-binding methyltransferase superfamily. RNA methyltransferase TrmH family.

This is an uncharacterized protein from Mycolicibacterium gilvum (strain PYR-GCK) (Mycobacterium gilvum (strain PYR-GCK)).